A 466-amino-acid chain; its full sequence is Glutamate--tRNA ligase (466 aa).

A 'HIGH' region motif is present at residues 9–19 (PSPTGDLHVGS). A 'KMSKS' region motif is present at residues 237 to 241 (KLSKR). Lys240 contacts ATP.

It belongs to the class-I aminoacyl-tRNA synthetase family. Glutamate--tRNA ligase type 1 subfamily. Monomer.

Its subcellular location is the cytoplasm. The enzyme catalyses tRNA(Glu) + L-glutamate + ATP = L-glutamyl-tRNA(Glu) + AMP + diphosphate. Catalyzes the attachment of glutamate to tRNA(Glu) in a two-step reaction: glutamate is first activated by ATP to form Glu-AMP and then transferred to the acceptor end of tRNA(Glu). This is Glutamate--tRNA ligase from Baumannia cicadellinicola subsp. Homalodisca coagulata.